The chain runs to 373 residues: D-alanine--D-alanine ligase (373 aa).

Residues 165–369 (KRLAREAGIP…FGDLVSALIA (205 aa)) enclose the ATP-grasp domain. 192–247 (KERLGLPVFVKPARGGSSIGISKVDSWEEFDAAIDLAFSNDNKVIVEAMIHGAEVE) is an ATP binding site. Mg(2+)-binding residues include Asp-324, Glu-336, and Asn-338.

Belongs to the D-alanine--D-alanine ligase family. The cofactor is Mg(2+). It depends on Mn(2+) as a cofactor.

The protein localises to the cytoplasm. The enzyme catalyses 2 D-alanine + ATP = D-alanyl-D-alanine + ADP + phosphate + H(+). It functions in the pathway cell wall biogenesis; peptidoglycan biosynthesis. In terms of biological role, cell wall formation. In Corynebacterium jeikeium (strain K411), this protein is D-alanine--D-alanine ligase.